A 443-amino-acid polypeptide reads, in one-letter code: Adenylyltransferase and sulfurtransferase UBA4 (443 aa).

Residues Gly81, Asp102, 109 to 113, Lys126, and 170 to 171 each bind ATP; these read SNLHR and DS. Cys212 and Cys215 together coordinate Zn(2+). Cys229 functions as the Glycyl thioester intermediate; for adenylyltransferase activity in the catalytic mechanism. Zn(2+)-binding residues include Cys290 and Cys293. Positions 342 to 441 constitute a Rhodanese domain; that stretch reads KERGFVCLDV…YIDEINPSLP (100 aa). Cys400 serves as the catalytic Cysteine persulfide intermediate; for sulfurtransferase activity.

It in the N-terminal section; belongs to the HesA/MoeB/ThiF family. UBA4 subfamily. Zn(2+) is required as a cofactor.

It is found in the cytoplasm. Its subcellular location is the cytosol. The protein operates within tRNA modification; 5-methoxycarbonylmethyl-2-thiouridine-tRNA biosynthesis. Its function is as follows. Plays a central role in 2-thiolation of mcm(5)S(2)U at tRNA wobble positions of cytosolic tRNA(Lys), tRNA(Glu) and tRNA(Gln). Acts by mediating the C-terminal thiocarboxylation of sulfur carrier URM1. Its N-terminus first activates URM1 as acyl-adenylate (-COAMP), then the persulfide sulfur on the catalytic cysteine is transferred to URM1 to form thiocarboxylation (-COSH) of its C-terminus. The reaction probably involves hydrogen sulfide that is generated from the persulfide intermediate and that acts as a nucleophile towards URM1. Subsequently, a transient disulfide bond is formed. Does not use thiosulfate as sulfur donor; NFS1 probably acting as a sulfur donor for thiocarboxylation reactions. Prior mcm(5) tRNA modification by the elongator complex is required for 2-thiolation. May also be involved in protein urmylation. This is Adenylyltransferase and sulfurtransferase UBA4 from Eremothecium gossypii (strain ATCC 10895 / CBS 109.51 / FGSC 9923 / NRRL Y-1056) (Yeast).